The following is a 357-amino-acid chain: Protein ATP1B4 (357 aa).

Over 1 to 110 (MRRQLRSRRA…FLARTGQSWS (110 aa)) the chain is Nuclear. The interval 15-80 (YSYRYRLDDP…EEGQGQPTGN (66 aa)) is disordered. The segment covering 52–73 (EEEEEEEEKEEEEEEEKEEEEG) has biased composition (acidic residues). A helical; Signal-anchor for type II membrane protein membrane pass occupies residues 111–131 (LILLIYFFFYASLAAVITLCM). Topologically, residues 132-357 (YTLFLTISPY…RVIFTLNIET (226 aa)) are perinuclear space.

The protein belongs to the X(+)/potassium ATPases subunit beta family. In terms of assembly, associates with a SMAD7-transcriptional complex. Interacts with SNW1 and TOR1AIP1. According to PubMed:17592128, does not associate with known Na,K-ATPase alpha-subunits. As to expression, highly expressed in skeletal muscle and at a lower level in heart.

The protein resides in the nucleus inner membrane. In terms of biological role, may act as a transcriptional coregulator during muscle development through its interaction with SNW1. Has lost its ancestral function as a Na,K-ATPase beta-subunit. This chain is Protein ATP1B4 (ATP1B4), found in Homo sapiens (Human).